A 108-amino-acid polypeptide reads, in one-letter code: Thioredoxin (108 aa).

The Thioredoxin domain occupies Ser-2–Leu-108. A disulfide bond links Cys-33 and Cys-36.

Belongs to the thioredoxin family.

In terms of biological role, component of the thioredoxin-thioredoxin reductase system. Participates in various redox reactions through the reversible oxidation of its active center dithiol to a disulfide and catalyzes dithiol-disulfide exchange reactions. The polypeptide is Thioredoxin (trxA) (Acidithiobacillus ferridurans).